A 640-amino-acid polypeptide reads, in one-letter code: tRNA uridine 5-carboxymethylaminomethyl modification enzyme MnmG (640 aa).

Residue 9-14 (GGGHAG) coordinates FAD. 289–303 (GPRYCPSIEDKINKF) serves as a coordination point for NAD(+).

It belongs to the MnmG family. In terms of assembly, homodimer. Heterotetramer of two MnmE and two MnmG subunits. The cofactor is FAD.

Its subcellular location is the cytoplasm. In terms of biological role, NAD-binding protein involved in the addition of a carboxymethylaminomethyl (cmnm) group at the wobble position (U34) of certain tRNAs, forming tRNA-cmnm(5)s(2)U34. The polypeptide is tRNA uridine 5-carboxymethylaminomethyl modification enzyme MnmG (Campylobacter hominis (strain ATCC BAA-381 / DSM 21671 / CCUG 45161 / LMG 19568 / NCTC 13146 / CH001A)).